Here is a 382-residue protein sequence, read N- to C-terminus: Inactive serine protease 54 (382 aa).

Positions 1-20 (MAELRGILLLLLYMSHSSSA) are cleaved as a signal peptide. The region spanning 29-258 (IVDQLHENLV…YSNWIIAKTR (230 aa)) is the Peptidase S1 domain. The N-linked (GlcNAc...) asparagine glycan is linked to N113. 3 disulfides stabilise this stretch: C154/C216, C185/C195, and C206/C237.

This sequence belongs to the peptidase S1 family. Plasma kallikrein subfamily.

It is found in the secreted. This chain is Inactive serine protease 54 (Prss54), found in Rattus norvegicus (Rat).